Here is a 302-residue protein sequence, read N- to C-terminus: FeMo cofactor biosynthesis protein NifB (302 aa).

Residues 22 to 264 (HDKYGRVHLP…PQFRACGQCR (243 aa)) form the Radical SAM core domain. Positions 36, 40, and 43 each coordinate [4Fe-4S] cluster. S-adenosyl-L-methionine-binding residues include G91, T142, and I194. Positions 260 and 263 each coordinate [4Fe-4S] cluster.

Belongs to the radical SAM superfamily. NifB family. In terms of assembly, monomer. [4Fe-4S] cluster is required as a cofactor.

It participates in cofactor biosynthesis; Fe-Mo cofactor biosynthesis. Involved in the biosynthesis of the iron-molybdenum cofactor (FeMo-co or M-cluster) found in the dinitrogenase enzyme of the nitrogenase complex in nitrogen-fixing microorganisms. NifB catalyzes the crucial step of radical SAM-dependent carbide insertion that occurs concomitant with the insertion of a 9th sulfur and the rearrangement/coupling of two [4Fe-4S] clusters into a [8Fe-9S-C] cluster, the precursor to the M-cluster. In Methanocaldococcus infernus (strain DSM 11812 / JCM 15783 / ME), this protein is FeMo cofactor biosynthesis protein NifB.